We begin with the raw amino-acid sequence, 466 residues long: Ribulose bisphosphate carboxylase large chain (466 aa).

Residue Lys5 is modified to N6,N6,N6-trimethyllysine. Residues Asn114 and Thr164 each contribute to the substrate site. Lys166 serves as the catalytic Proton acceptor. Lys168 is a binding site for substrate. 3 residues coordinate Mg(2+): Lys192, Asp194, and Glu195. Lys192 carries the post-translational modification N6-carboxylysine. His285 functions as the Proton acceptor in the catalytic mechanism. Arg286, His318, and Ser370 together coordinate substrate.

It belongs to the RuBisCO large chain family. Type I subfamily. As to quaternary structure, heterohexadecamer of 8 large chains and 8 small chains; disulfide-linked. The disulfide link is formed within the large subunit homodimers. Mg(2+) is required as a cofactor. The disulfide bond which can form in the large chain dimeric partners within the hexadecamer appears to be associated with oxidative stress and protein turnover.

It is found in the plastid. The protein resides in the chloroplast. It catalyses the reaction 2 (2R)-3-phosphoglycerate + 2 H(+) = D-ribulose 1,5-bisphosphate + CO2 + H2O. It carries out the reaction D-ribulose 1,5-bisphosphate + O2 = 2-phosphoglycolate + (2R)-3-phosphoglycerate + 2 H(+). RuBisCO catalyzes two reactions: the carboxylation of D-ribulose 1,5-bisphosphate, the primary event in carbon dioxide fixation, as well as the oxidative fragmentation of the pentose substrate in the photorespiration process. Both reactions occur simultaneously and in competition at the same active site. This chain is Ribulose bisphosphate carboxylase large chain, found in Betula nigra (River birch).